A 147-amino-acid chain; its full sequence is Hemoglobin subunit beta (147 aa).

Position 2 is an N-acetylvaline (Val2). A Globin domain is found at 3–147 (HLTGDEKAAV…VANALAHKYH (145 aa)). Thr13 carries the post-translational modification Phosphothreonine. The residue at position 45 (Ser45) is a Phosphoserine. The residue at position 60 (Lys60) is an N6-acetyllysine. Position 64 (His64) interacts with heme b. Residue Lys83 is modified to N6-acetyllysine. His93 provides a ligand contact to heme b. Cys94 carries the S-nitrosocysteine modification. At Lys145 the chain carries N6-acetyllysine.

Belongs to the globin family. In terms of assembly, heterotetramer of two alpha chains and two beta chains. Red blood cells.

Functionally, involved in oxygen transport from the lung to the various peripheral tissues. This Alouatta belzebul (Red-handed howler monkey) protein is Hemoglobin subunit beta (HBB).